Reading from the N-terminus, the 455-residue chain is Golgi pH regulator (455 aa).

Helical transmembrane passes span 5–25 (IDSS…WLFF), 46–66 (VTFA…LGVL), 79–99 (LCVI…YFIV), 114–134 (CLLW…FPIL), and 150–170 (VGVI…VNCP). N-linked (GlcNAc...) asparagine glycosylation is found at Asn-180 and Asn-243. 4 helical membrane-spanning segments follow: residues 290–310 (GYFF…NIVL), 343–363 (ISFI…LITL), 378–398 (VIVL…VLLI), and 425–445 (WFDV…YLAH).

This sequence belongs to the Golgi pH regulator (TC 1.A.38) family. In terms of assembly, homotrimer. Interacts with RABL3; the interaction stabilizes GPR89B.

It localises to the golgi apparatus membrane. It catalyses the reaction iodide(out) = iodide(in). The enzyme catalyses chloride(in) = chloride(out). The catalysed reaction is bromide(in) = bromide(out). It carries out the reaction fluoride(in) = fluoride(out). Voltage-gated channel that enables the transfer of anions such as iodide, chloride, bromide and fluoride which may function in counter-ion conductance and participates in Golgi acidification. Plays a role in lymphocyte development, probably by acting as a RABL3 effector in hematopoietic cells. In Cricetulus griseus (Chinese hamster), this protein is Golgi pH regulator.